The primary structure comprises 188 residues: MLVHPEAMSVGALADKIRKIENWPQKGILFHDITPVLQSAEYFRLLVDLLVYRYMDQKIDIVAGLDARGFIIGAALAYQLNVGFVPIRKKGKLPFETVSQSYALEYGEAAVEIHTDAVKLGSRVLLVDDLVATGGTMLAGLELIRKLGGEIVEAAAILEFTDLQGGKNIRASGAPLFTLLQNEGCMKG.

It belongs to the purine/pyrimidine phosphoribosyltransferase family. Homodimer.

The protein resides in the cytoplasm. The catalysed reaction is AMP + diphosphate = 5-phospho-alpha-D-ribose 1-diphosphate + adenine. It functions in the pathway purine metabolism; AMP biosynthesis via salvage pathway; AMP from adenine: step 1/1. Functionally, catalyzes a salvage reaction resulting in the formation of AMP, that is energically less costly than de novo synthesis. The polypeptide is Adenine phosphoribosyltransferase (Neisseria meningitidis serogroup A / serotype 4A (strain DSM 15465 / Z2491)).